The sequence spans 946 residues: Zinc finger CCCH-type antiviral protein 1 (946 aa).

Positions 1 to 254 (MTDPEVFCFI…DRSKSRDRFH (254 aa)) are N-terminal domain. The Nuclear localization signal motif lies at 69–76 (RARVCRRK). 4 C3H1-type zinc fingers span residues 73-86 (CRRK…DSLH), 87-113 (LCKL…HDVL), 150-172 (CKSY…ERLH), and 173-194 (ICEH…HNLM). Disordered regions lie at residues 221–283 (NKHT…KDPL) and 302–354 (RAQL…AAGF). A binding to EXOSC5 region spans residues 224 to 254 (TRRNPPSMRAPHPHRRGGAHRDRSKSRDRFH). Residues 242–257 (AHRDRSKSRDRFHHNS) are compositionally biased toward basic and acidic residues. A Phosphoserine modification is found at Ser257. Ser262 is subject to Phosphoserine; by GSK3-beta. Phosphoserine is present on residues Ser265, Ser269, and Ser273. Thr277 is modified (phosphothreonine). The Nuclear export signal signature appears at 283–290 (LEDVSADV). Residues Ser324 and Ser350 each carry the phosphoserine modification. Residues 412-413 (KR) carry the Nuclear localization signal motif. Position 425 is a phosphoserine (Ser425). Residues 461-491 (NPAWPGTSTHNGPNGFSQIMDETPNVSKSSP) form a disordered region. Residues 466 to 477 (GTSTHNGPNGFS) show a composition bias toward polar residues. The residue at position 508 (Tyr508) is a Phosphotyrosine. The tract at residues 523–570 (GETTTPVQGSNRLPPSPLSSSTSHRVAASGSPGKSSTHASVSPASEPS) is disordered. Residues 524 to 533 (ETTTPVQGSN) show a composition bias toward polar residues. Phosphoserine is present on Ser553. Residues 554–567 (PGKSSTHASVSPAS) show a composition bias toward polar residues. Phosphoserine is present on residues Ser583 and Ser680. Residues 684–771 (FVEKTLNSVF…ASKTQRHVVR (88 aa)) form the WWE domain. In terms of domain architecture, PARP catalytic spans 805 to 946 (SPQRNASTVS…SLDSSGLQRK (142 aa)).

Belongs to the ARTD/PARP family. As to quaternary structure, homodimer or homooligomer. Homooligomerization is essential for its antiviral activity. Interacts with EXOSC5. Interacts (via N-terminal domain) with DDX17 in an RNA-independent manner. Interacts with EXOSC3, EXOSC7, DCP2 and DCP1A. Interacts with PARN in an RNA-independent manner. Interacts with XRN1 in an RNA-dependent manner. Interacts (via N-terminal domain) with DHX30 (via N-terminus) in an RNA-independent manner. Isoform 2 interacts (via zinc-fingers) with RIGI in an RNA-dependent manner. Post-translationally, phosphorylation at Ser-273 is essential for sequential phosphorylation of Ser-269, Ser-265, Ser-262 and Ser-257 by GSK3-beta. Phosphorylation by GSK3-beta enhances its antiviral activity.

It is found in the cytoplasm. The protein resides in the nucleus. Its function is as follows. Antiviral protein which inhibits the replication of viruses by recruiting the cellular RNA degradation machineries to degrade the viral mRNAs. Binds to a ZAP-responsive element (ZRE) present in the target viral mRNA, recruits cellular poly(A)-specific ribonuclease PARN to remove the poly(A) tail, and the 3'-5' exoribonuclease complex exosome to degrade the RNA body from the 3'-end. It also recruits the decapping complex DCP1-DCP2 through RNA helicase p72 (DDX17) to remove the cap structure of the viral mRNA to initiate its degradation from the 5'-end. Its target viruses belong to families which include retroviridae: human immunodeficiency virus type 1 (HIV-1) and moloney and murine leukemia virus (MoMLV), filoviridae: ebola virus (EBOV) and marburg virus (MARV), togaviridae: sindbis virus (SINV) and Ross river virus (RRV). Specifically targets the multiply spliced but not unspliced or singly spliced HIV-1 mRNAs for degradation. Isoform 1 is a more potent viral inhibitor than isoform 2. Isoform 2 acts as a positive regulator of RIG-I signaling resulting in activation of the downstream effector IRF3 leading to the expression of type I IFNs and IFN stimulated genes (ISGs). This Mus musculus (Mouse) protein is Zinc finger CCCH-type antiviral protein 1 (Zc3hav1).